The primary structure comprises 347 residues: D-alanine--D-alanine ligase (347 aa).

One can recognise an ATP-grasp domain in the interval 138–339 (KILCSHAGIP…YSQVIETILA (202 aa)). 171-226 (SDRFTFPLFVKPVDAGSSFGCTFVDFFEQLPVAIEHALQHGKSAIVEPALDAPEVF) serves as a coordination point for ATP. Positions 296, 308, and 310 each coordinate Mg(2+).

Belongs to the D-alanine--D-alanine ligase family. Mg(2+) is required as a cofactor. Requires Mn(2+) as cofactor.

Its subcellular location is the cytoplasm. The enzyme catalyses 2 D-alanine + ATP = D-alanyl-D-alanine + ADP + phosphate + H(+). The protein operates within cell wall biogenesis; peptidoglycan biosynthesis. Functionally, cell wall formation. The chain is D-alanine--D-alanine ligase from Tropheryma whipplei (strain Twist) (Whipple's bacillus).